A 177-amino-acid chain; its full sequence is Peptide deformylase (177 aa).

Fe cation is bound by residues cysteine 99 and histidine 141. Glutamate 142 is an active-site residue. A Fe cation-binding site is contributed by histidine 145.

The protein belongs to the polypeptide deformylase family. It depends on Fe(2+) as a cofactor.

It catalyses the reaction N-terminal N-formyl-L-methionyl-[peptide] + H2O = N-terminal L-methionyl-[peptide] + formate. Its function is as follows. Removes the formyl group from the N-terminal Met of newly synthesized proteins. Requires at least a dipeptide for an efficient rate of reaction. N-terminal L-methionine is a prerequisite for activity but the enzyme has broad specificity at other positions. This Rhizorhabdus wittichii (strain DSM 6014 / CCUG 31198 / JCM 15750 / NBRC 105917 / EY 4224 / RW1) (Sphingomonas wittichii) protein is Peptide deformylase.